We begin with the raw amino-acid sequence, 455 residues long: Bifunctional protein GlmU (455 aa).

The tract at residues 1-226 is pyrophosphorylase; sequence MSLDIVILAA…AMEVQGANDR (226 aa). UDP-N-acetyl-alpha-D-glucosamine is bound by residues 8 to 11, lysine 22, glutamine 73, 78 to 79, 99 to 101, glycine 136, glutamate 151, asparagine 166, and asparagine 224; these read LAAG, GT, and YGD. A Mg(2+)-binding site is contributed by aspartate 101. A Mg(2+)-binding site is contributed by asparagine 224. Residues 227 to 247 are linker; it reads RQLSELERHYQLREGRRLMAQ. An N-acetyltransferase region spans residues 248–455; it reads GVTLRDPARF…WKRPEKIKKS (208 aa). Positions 330 and 348 each coordinate UDP-N-acetyl-alpha-D-glucosamine. Histidine 360 serves as the catalytic Proton acceptor. UDP-N-acetyl-alpha-D-glucosamine-binding residues include tyrosine 363 and asparagine 374. Acetyl-CoA is bound by residues alanine 377, 383-384, serine 402, alanine 420, and arginine 437; that span reads NY.

It in the N-terminal section; belongs to the N-acetylglucosamine-1-phosphate uridyltransferase family. The protein in the C-terminal section; belongs to the transferase hexapeptide repeat family. As to quaternary structure, homotrimer. Mg(2+) is required as a cofactor.

It is found in the cytoplasm. It catalyses the reaction alpha-D-glucosamine 1-phosphate + acetyl-CoA = N-acetyl-alpha-D-glucosamine 1-phosphate + CoA + H(+). It carries out the reaction N-acetyl-alpha-D-glucosamine 1-phosphate + UTP + H(+) = UDP-N-acetyl-alpha-D-glucosamine + diphosphate. It functions in the pathway nucleotide-sugar biosynthesis; UDP-N-acetyl-alpha-D-glucosamine biosynthesis; N-acetyl-alpha-D-glucosamine 1-phosphate from alpha-D-glucosamine 6-phosphate (route II): step 2/2. Its pathway is nucleotide-sugar biosynthesis; UDP-N-acetyl-alpha-D-glucosamine biosynthesis; UDP-N-acetyl-alpha-D-glucosamine from N-acetyl-alpha-D-glucosamine 1-phosphate: step 1/1. It participates in bacterial outer membrane biogenesis; LPS lipid A biosynthesis. Functionally, catalyzes the last two sequential reactions in the de novo biosynthetic pathway for UDP-N-acetylglucosamine (UDP-GlcNAc). The C-terminal domain catalyzes the transfer of acetyl group from acetyl coenzyme A to glucosamine-1-phosphate (GlcN-1-P) to produce N-acetylglucosamine-1-phosphate (GlcNAc-1-P), which is converted into UDP-GlcNAc by the transfer of uridine 5-monophosphate (from uridine 5-triphosphate), a reaction catalyzed by the N-terminal domain. In Pseudomonas putida (strain ATCC 700007 / DSM 6899 / JCM 31910 / BCRC 17059 / LMG 24140 / F1), this protein is Bifunctional protein GlmU.